The primary structure comprises 193 residues: dCTP deaminase (193 aa).

DCTP contacts are provided by residues 110–115, Asp-128, 136–138, Tyr-171, Lys-178, and Gln-182; these read RSSLAR and VLE. The active-site Proton donor/acceptor is the Glu-138. The segment at 169 to 193 is disordered; that stretch reads RPYNRRQDAKYRDQQGAVASRIDKD.

The protein belongs to the dCTP deaminase family. Homotrimer.

It catalyses the reaction dCTP + H2O + H(+) = dUTP + NH4(+). It participates in pyrimidine metabolism; dUMP biosynthesis; dUMP from dCTP (dUTP route): step 1/2. Functionally, catalyzes the deamination of dCTP to dUTP. The sequence is that of dCTP deaminase from Salmonella paratyphi B (strain ATCC BAA-1250 / SPB7).